A 231-amino-acid polypeptide reads, in one-letter code: PIAGSMVLAAILLKLGGYGIIRMMQILPTTKTDLFLPFIVLALWGAILANLTCLQQTDLKSLIAYSSISHMGLVVAAIIIQSPWGLSGAMALMIAHGFTSSALFCLANTTYERTHTRILILTRGFHNILPMATTWWLLANLMNIATPPTLNFTSELLIMSTLFNWCPTTIILLGLSMLITASYSLHMFLSSQMGPTPLNNQTEPTHSREHLLMTLHLAPLMMISMKPELII.

Transmembrane regions (helical) follow at residues Pro-1 to Ile-21, Leu-34 to Leu-54, Ser-61 to Ile-80, Trp-84 to Leu-106, Ile-128 to Pro-148, and Thr-169 to Leu-189.

The protein belongs to the complex I subunit 4 family.

Its subcellular location is the mitochondrion membrane. It carries out the reaction a ubiquinone + NADH + 5 H(+)(in) = a ubiquinol + NAD(+) + 4 H(+)(out). Its function is as follows. Core subunit of the mitochondrial membrane respiratory chain NADH dehydrogenase (Complex I) that is believed to belong to the minimal assembly required for catalysis. Complex I functions in the transfer of electrons from NADH to the respiratory chain. The immediate electron acceptor for the enzyme is believed to be ubiquinone. This is NADH-ubiquinone oxidoreductase chain 4 (MT-ND4) from Metlapilcoatlus nummifer (Mexican jumping pitviper).